A 29-amino-acid chain; its full sequence is Cyclotide cter-K (29 aa).

Residues 1–29 constitute a cross-link (cyclopeptide (His-Asn)); the sequence is HEPCGESCVFIPCITTVVGCSCKNKVCYN. Disulfide bonds link Cys4–Cys20, Cys8–Cys22, and Cys13–Cys27.

In terms of processing, contains 3 disulfide bonds. Post-translationally, this is a cyclic peptide.

Functionally, probably participates in a plant defense mechanism. The protein is Cyclotide cter-K of Clitoria ternatea (Butterfly pea).